Reading from the N-terminus, the 248-residue chain is Granzyme-like protein 2 (248 aa).

A signal peptide spans 1-18; the sequence is MFLFLIFLVAVLPVNTEG. A propeptide spans 19–20 (activation peptide); sequence GE. The Peptidase S1 domain maps to 21-243; that stretch reads IVWGTESKPH…FIPWIQKTMK (223 aa). A disulfide bridge links C50 with C66. Catalysis depends on charge relay system residues H65 and D108. Cystine bridges form between C142–C207 and C172–C186. N-linked (GlcNAc...) asparagine glycans are attached at residues N152 and N180. S201 functions as the Charge relay system in the catalytic mechanism.

The protein belongs to the peptidase S1 family. Granzyme subfamily. Duodenum, lung and spleen.

In terms of biological role, this enzyme is necessary for target cell lysis in cell-mediated immune responses. This Rattus norvegicus (Rat) protein is Granzyme-like protein 2.